A 271-amino-acid chain; its full sequence is Phosphate import ATP-binding protein PstB (271 aa).

In terms of domain architecture, ABC transporter spans 25 to 266 (VDVRQLSLWY…PKHPYTEAYI (242 aa)). Position 57–64 (57–64 (GPSGCGKS)) interacts with ATP.

It belongs to the ABC transporter superfamily. Phosphate importer (TC 3.A.1.7) family. In terms of assembly, the complex is composed of two ATP-binding proteins (PstB), two transmembrane proteins (PstC and PstA) and a solute-binding protein (PstS).

The protein resides in the cell inner membrane. The enzyme catalyses phosphate(out) + ATP + H2O = ADP + 2 phosphate(in) + H(+). Its function is as follows. Part of the ABC transporter complex PstSACB involved in phosphate import. Responsible for energy coupling to the transport system. The sequence is that of Phosphate import ATP-binding protein PstB from Thermus thermophilus (strain ATCC BAA-163 / DSM 7039 / HB27).